The following is a 442-amino-acid chain: Magnesium transporter MRS2-1 (442 aa).

Residues 1–30 (MSELKERLLPPRPASAMNLRDASVTRPSAS) form a disordered region. Helical transmembrane passes span 378–398 (LLLTTATFVVAIFGVVAGIFG) and 414–434 (WVLIITGVCGFVIFSAFVWFF). The Required for magnesium transport activity motif lies at 398 to 400 (GMN).

It belongs to the CorA metal ion transporter (MIT) (TC 1.A.35.5) family. Expressed in the whole plant except stems.

It is found in the membrane. Its function is as follows. Magnesium transporter that may mediate the influx of magnesium. The sequence is that of Magnesium transporter MRS2-1 (MRS2-1) from Arabidopsis thaliana (Mouse-ear cress).